Consider the following 538-residue polypeptide: Syncytin-2 (538 aa).

The first 15 residues, 1–15 (MGLLLLVLILTPSLA), serve as a signal peptide directing secretion. Over 16–478 (AYRHPDFPLL…GWLNWEGTWK (463 aa)) the chain is Extracellular. Residues 43 to 46 (CWLC) carry the CXXC motif. Intrachain disulfides connect Cys-43–Cys-46, Cys-43–Cys-439, and Cys-431–Cys-438. 8 N-linked (GlcNAc...) asparagine glycosylation sites follow: Asn-133, Asn-146, Asn-177, Asn-220, Asn-241, Asn-247, Asn-312, and Asn-332. A fusion peptide region spans residues 354 to 374 (FIPLLAGLGILAGTGTGIAGI). The CKS-17 motif lies at 414 to 430 (LQNRRGLDMLTAAQGGI). The short motif at 431–439 (CLALDEKCC) is the CX6CC element. N-linked (GlcNAc...) asparagine glycosylation is present at Asn-443. A helical transmembrane segment spans residues 479–499 (WFSWVLPLTGPLVSLLLLLLF). Topologically, residues 500-538 (GPCLLNLITQFVSSRLQAIKLQTNLSAGRRPRNIQESPF) are cytoplasmic.

This sequence belongs to the gamma type-C retroviral envelope protein family. HERV class-I FRD env subfamily. As to quaternary structure, the surface and transmembrane proteins form a heterodimer. They are attached by non-covalent interactions or by a labile interchain disulfide bond. In terms of processing, specific enzymatic cleavages in vivo yield the mature SU and TM proteins. The CXXC motif is highly conserved across a broad range of retroviral envelope proteins. It is thought to participate in the formation of a labile disulfide bond possibly with the CX6CC motif present in the transmembrane protein.

Its subcellular location is the virion. The protein resides in the cell membrane. Its function is as follows. This endogenous retroviral envelope protein has retained its original fusogenic properties and participates in trophoblast fusion and the formation of a syncytium during placenta morphogenesis. The interaction with MFSD2A is apparently important for this process. Functionally, endogenous envelope proteins may have kept, lost or modified their original function during evolution but this one can still make pseudotypes with MLV, HIV-1 or SIV-1 virions and confer infectivity. Retroviral envelope proteins mediate receptor recognition and membrane fusion during early infection. The surface protein mediates receptor recognition, while the transmembrane protein anchors the envelope heterodimer to the viral membrane through one transmembrane domain. The other hydrophobic domain, called fusion peptide, mediates fusion of the viral membrane with the target cell membrane. In Gorilla gorilla gorilla (Western lowland gorilla), this protein is Syncytin-2 (ERVFRD-1).